The sequence spans 445 residues: Putrescine hydroxycinnamoyltransferase 1 (445 aa).

Residues His154 and Asp388 each act as proton acceptor in the active site.

This sequence belongs to the plant acyltransferase family. Expressed in leaves.

In terms of biological role, hydroxycinnamoyl transferase that catalyzes the transfer of an acyl from p-coumaryol-CoA to putrescine, to produce coumaroyl putrescine. This Oryza sativa subsp. japonica (Rice) protein is Putrescine hydroxycinnamoyltransferase 1.